A 182-amino-acid polypeptide reads, in one-letter code: Inner membrane-spanning protein YciB (182 aa).

5 helical membrane passes run 22-42, 53-73, 76-96, 121-141, and 149-169; these read IYAA…VVWV, ITLV…NEAF, WKVT…QFLF, FSWG…AFYL, and FKVF…GIYI.

This sequence belongs to the YciB family.

The protein resides in the cell inner membrane. Plays a role in cell envelope biogenesis, maintenance of cell envelope integrity and membrane homeostasis. The sequence is that of Inner membrane-spanning protein YciB from Tolumonas auensis (strain DSM 9187 / NBRC 110442 / TA 4).